We begin with the raw amino-acid sequence, 416 residues long: Protein sine oculis (416 aa).

2 disordered regions span residues 32–91 and 262–329; these read TGLS…SGGG and VSNW…NNGL. Residues 42–57 are compositionally biased toward low complexity; sequence NNNNNNSSTSNNNNST. The segment covering 79–91 has biased composition (gly residues); sequence NGGGGGGVVSGGG. The homeobox DNA-binding region spans 218–277; sequence GEETSYCFKEKSRSVLRDWYSHNPYPSPREKRDLAEATGLTTTQVSNWFKNRRQRDRAAE. Positions 273–290 are enriched in basic and acidic residues; that stretch reads DRAAEHKDGSTDKQHLDS. Residues 291 to 329 show a composition bias toward low complexity; the sequence is SSDSEMEGSMLPSQSAQHQQQQQQQQHSPGNSSGNNNGL.

Belongs to the SIX/Sine oculis homeobox family. In terms of tissue distribution, in developing embryos, expressed in the eye disk epithelium, bolwig's organ and the optic lobe primordium at areas of invagination. In adults, present in photoreceptor cells in the apical regions of the retina, and in optic lobes.

Its subcellular location is the nucleus. Functionally, required for visual system development. May transcriptionally regulate genes necessary for optic lobe invagination and Bolwig's nerve formation. The sequence is that of Protein sine oculis (so) from Drosophila melanogaster (Fruit fly).